The sequence spans 285 residues: 4-diphosphocytidyl-2-C-methyl-D-erythritol kinase (285 aa).

The active site involves Lys9. Pro89–Ser99 contributes to the ATP binding site. The active site involves Asp131.

The protein belongs to the GHMP kinase family. IspE subfamily.

The enzyme catalyses 4-CDP-2-C-methyl-D-erythritol + ATP = 4-CDP-2-C-methyl-D-erythritol 2-phosphate + ADP + H(+). It participates in isoprenoid biosynthesis; isopentenyl diphosphate biosynthesis via DXP pathway; isopentenyl diphosphate from 1-deoxy-D-xylulose 5-phosphate: step 3/6. Its function is as follows. Catalyzes the phosphorylation of the position 2 hydroxy group of 4-diphosphocytidyl-2C-methyl-D-erythritol. The chain is 4-diphosphocytidyl-2-C-methyl-D-erythritol kinase from Thermodesulfovibrio yellowstonii (strain ATCC 51303 / DSM 11347 / YP87).